The primary structure comprises 150 residues: UPF0756 membrane protein ABSDF1616 (150 aa).

4 helical membrane passes run 1–21 (MLAQFDVNLVVLLVLLICGLL), 45–65 (FFPYIQAHGLNLGILILTIGV), 83–103 (FISFKSLVAIAIGLLVAWLGG), and 115–135 (VVAGLLIGTVAGVALLRGVPV).

This sequence belongs to the UPF0756 family.

The protein resides in the cell membrane. This Acinetobacter baumannii (strain SDF) protein is UPF0756 membrane protein ABSDF1616.